The primary structure comprises 92 residues: MSRSIHKGPFIDVSLLKRIEALNISGKKEVLKTWSRASTIIPDMVGHTIAVYNGKQHFPVFVSDQMVGHKLGEFVPTRTFRTHVKGDRKARR.

It belongs to the universal ribosomal protein uS19 family.

The protein localises to the plastid. It localises to the chloroplast. Functionally, protein S19 forms a complex with S13 that binds strongly to the 16S ribosomal RNA. This is Small ribosomal subunit protein uS19c from Pyropia yezoensis (Susabi-nori).